A 464-amino-acid polypeptide reads, in one-letter code: ATP synthase subunit beta (464 aa).

150–157 (GGAGVGKT) is a binding site for ATP.

Belongs to the ATPase alpha/beta chains family. F-type ATPases have 2 components, CF(1) - the catalytic core - and CF(0) - the membrane proton channel. CF(1) has five subunits: alpha(3), beta(3), gamma(1), delta(1), epsilon(1). CF(0) has three main subunits: a(1), b(2) and c(9-12). The alpha and beta chains form an alternating ring which encloses part of the gamma chain. CF(1) is attached to CF(0) by a central stalk formed by the gamma and epsilon chains, while a peripheral stalk is formed by the delta and b chains.

Its subcellular location is the cell membrane. It carries out the reaction ATP + H2O + 4 H(+)(in) = ADP + phosphate + 5 H(+)(out). Produces ATP from ADP in the presence of a proton gradient across the membrane. The catalytic sites are hosted primarily by the beta subunits. This is ATP synthase subunit beta from Dehalococcoides mccartyi (strain ATCC BAA-2100 / JCM 16839 / KCTC 5957 / BAV1).